The chain runs to 237 residues: UPF0053 inner membrane protein YgdQ (237 aa).

The Periplasmic portion of the chain corresponds to 1-17 (MLFAWITDPNAWLALGT). The helical transmembrane segment at 18 to 38 (LTLLEIVLGIDNIIFLSLVVA) threads the bilayer. Residues 39-50 (KLPTAQRAHARR) lie on the Cytoplasmic side of the membrane. A helical transmembrane segment spans residues 51–71 (LGLAGAMVMRLALLASIAWVT). Residues 72-79 (RLTNPLFT) lie on the Periplasmic side of the membrane. The helical transmembrane segment at 80–100 (IFSQEISARDLILLLGGLFLI) threads the bilayer. Topologically, residues 101 to 124 (WKASKEIHESIEGEEEGLKTRVSS) are cytoplasmic. Residues 125-145 (FLGAIVQIMLLDIIFSLDSVI) traverse the membrane as a helical segment. Residues 146–151 (TAVGLS) are Periplasmic-facing. The chain crosses the membrane as a helical span at residues 152-172 (DHLFIMMAAVVIAVGVMMFAA). Residues 173-186 (RSIGDFVERHPSVK) lie on the Cytoplasmic side of the membrane. A helical transmembrane segment spans residues 187–207 (MLALSFLILVGFTLILESFDI). The Periplasmic segment spans residues 208–209 (HV). The chain crosses the membrane as a helical span at residues 210-230 (PKGYIYFAMFFSIAVESLNLI). Residues 231–237 (RNKKNPL) lie on the Cytoplasmic side of the membrane.

The protein belongs to the UPF0053 family.

It is found in the cell inner membrane. The protein is UPF0053 inner membrane protein YgdQ (ygdQ) of Escherichia coli O157:H7.